The sequence spans 186 residues: NADH-dependent FMN reductase SfnF (186 aa).

The protein belongs to the SsuE family.

It catalyses the reaction FMNH2 + NAD(+) = FMN + NADH + 2 H(+). Its function is as follows. Involved in the dimethyl sulfide degradation pathway. Catalyzes the NADH-dependent reduction of FMN. In Pseudomonas putida (Arthrobacter siderocapsulatus), this protein is NADH-dependent FMN reductase SfnF.